We begin with the raw amino-acid sequence, 419 residues long: Serine hydroxymethyltransferase 2 (419 aa).

(6S)-5,6,7,8-tetrahydrofolate is bound by residues Leu-120 and 124–126 (GHL). Lys-229 is subject to N6-(pyridoxal phosphate)lysine.

The protein belongs to the SHMT family. Homodimer. It depends on pyridoxal 5'-phosphate as a cofactor.

The protein resides in the cytoplasm. The enzyme catalyses (6R)-5,10-methylene-5,6,7,8-tetrahydrofolate + glycine + H2O = (6S)-5,6,7,8-tetrahydrofolate + L-serine. It functions in the pathway one-carbon metabolism; tetrahydrofolate interconversion. It participates in amino-acid biosynthesis; glycine biosynthesis; glycine from L-serine: step 1/1. Functionally, catalyzes the reversible interconversion of serine and glycine with tetrahydrofolate (THF) serving as the one-carbon carrier. This reaction serves as the major source of one-carbon groups required for the biosynthesis of purines, thymidylate, methionine, and other important biomolecules. Also exhibits THF-independent aldolase activity toward beta-hydroxyamino acids, producing glycine and aldehydes, via a retro-aldol mechanism. The sequence is that of Serine hydroxymethyltransferase 2 from Salmonella typhi.